The primary structure comprises 499 residues: Probable cytosol aminopeptidase (499 aa).

Mn(2+)-binding residues include Lys-263 and Asp-268. Lys-275 is a catalytic residue. Mn(2+) contacts are provided by Asp-286, Asp-345, and Glu-347. Arg-349 is an active-site residue.

This sequence belongs to the peptidase M17 family. The cofactor is Mn(2+).

It localises to the cytoplasm. The enzyme catalyses Release of an N-terminal amino acid, Xaa-|-Yaa-, in which Xaa is preferably Leu, but may be other amino acids including Pro although not Arg or Lys, and Yaa may be Pro. Amino acid amides and methyl esters are also readily hydrolyzed, but rates on arylamides are exceedingly low.. It catalyses the reaction Release of an N-terminal amino acid, preferentially leucine, but not glutamic or aspartic acids.. Functionally, presumably involved in the processing and regular turnover of intracellular proteins. Catalyzes the removal of unsubstituted N-terminal amino acids from various peptides. This Bradyrhizobium sp. (strain BTAi1 / ATCC BAA-1182) protein is Probable cytosol aminopeptidase.